The chain runs to 597 residues: Sodium/mannose cotransporter SLC5A10 (597 aa).

The Extracellular portion of the chain corresponds to 1–16 (MAVDNSTSDAHTPGRQ). Residue asparagine 5 is glycosylated (N-linked (GlcNAc...) asparagine). A helical transmembrane segment spans residues 17-37 (LTVVDIAIIAVYFALNVAVGI). Residues 38-73 (WSSCRASRNTVRGYFLAGRDMTWWPIGASLFASSEG) are Cytoplasmic-facing. A helical transmembrane segment spans residues 74 to 94 (SGLFIGLAGSGAAGGLAVAGF). The Extracellular portion of the chain corresponds to 95–100 (EWNATY). An N-linked (GlcNAc...) asparagine glycan is attached at asparagine 97. The helical transmembrane segment at 101 to 121 (VLLALAWVFVPIYLSSEIVTM) threads the bilayer. Residues 122–139 (PEYMQKRYGGQRIRMYLS) lie on the Cytoplasmic side of the membrane. The helical transmembrane segment at 140-162 (VLSLLLSVFTKISIDLYAGALFV) threads the bilayer. Residues 163–174 (HICLGWNFYLST) are Extracellular-facing. The helical transmembrane segment at 175–195 (VIMLAITALYTIAGGLTAVIY) threads the bilayer. Over 196 to 201 (TDALQT) the chain is Cytoplasmic. The helical transmembrane segment at 202–222 (LVMVAGAVILTIKAFEQIGGY) threads the bilayer. At 223-265 (EQLAEAYAQAVPSRTISNTTCHVPRADAMHMFRDPYTADLPWT) the chain is on the extracellular side. A helical membrane pass occupies residues 266 to 286 (GMTFGLTIMAAWYWCTDQVIV). Residues 287 to 301 (QRSLSARDLNHAKGG) are Cytoplasmic-facing. The chain crosses the membrane as a helical span at residues 302-322 (SILASYLKMLPMGLMVMPGMI). The Extracellular segment spans residues 323–367 (SRVLFPDDVGCVVPAECLRACGAEIGCSNIAYPKLVMELMPTGLR). A helical membrane pass occupies residues 368 to 388 (GLMVAVMMAALMSSLTSIFNS). The Cytoplasmic portion of the chain corresponds to 389–410 (SSTLFTMDIWRRLRPRAGEREL). Residues 411-431 (LLVGRLVIVVLVGVSVAWIPV) form a helical membrane-spanning segment. The Extracellular portion of the chain corresponds to 432–444 (LQGSNGGQLFIYM). A helical transmembrane segment spans residues 445–465 (QSVTSSLAPPVTAVFVLGIFW). Topologically, residues 466-472 (RRANEQG) are cytoplasmic. A helical transmembrane segment spans residues 473–493 (AFWGLMAGLAVGATRLVLEFL). At 494-514 (HPAPPCGHPDTRPPILHGVHY) the chain is on the extracellular side. Residues 515 to 535 (LHFAVALFLLSGAVVVAGSLL) form a helical membrane-spanning segment. Topologically, residues 536 to 576 (TPHPQGVQIQSLTWWTLAQDLPLGVKTGDGRASQRHAFWAR) are cytoplasmic. Residues 577–597 (VCGVNAILLMCVNIFFYTYFA) traverse the membrane as a helical segment.

It belongs to the sodium:solute symporter (SSF) (TC 2.A.21) family. In terms of tissue distribution, predominantyl expressed in kidney. Also detected at very low levels in testes, skeletal muscle, and spleen.

The protein localises to the apical cell membrane. It catalyses the reaction D-mannose(out) + Na(+)(out) = D-mannose(in) + Na(+)(in). The enzyme catalyses D-fructopyranose(out) + Na(+)(out) = D-fructopyranose(in) + Na(+)(in). In terms of biological role, electrogenic Na+-coupled sugar symporter that actively transports D-mannose or D-fructose at the plasma membrane, with a Na+ to sugar coupling ratio of 1:1. Transporter activity is driven by a transmembrane Na+ electrochemical gradient set by the Na+/K+ pump. Exclusively recognizes sugar substrates having a pyranose ring with an axial hydroxyl group on carbon 2. Has likely evolved to enable renal reabsorption of D-mannose, an important constituent of oligosaccharide chains of glycoproteins. Contributes to dietary D-fructose reabsorption from glomerular filtrate across the brush border of the kidney. In Bos taurus (Bovine), this protein is Sodium/mannose cotransporter SLC5A10 (SLC5A10).